Here is a 351-residue protein sequence, read N- to C-terminus: MTTICDLPRDLVARILSRVPLTSMRRVRFTCKRWNTISKDPSFAKTHFGKAARQFIMMSQSRVSLMSVKLHGDGNEDELADPYIYEGYRLDVYALGYDKNLKNHKILRFVDSYEPAVKHSIIEHEIFDLKSNAWRVLDATPDWEIDSYQRGVSLKGNTYFFAKEKIVVEGDDVVVIEDFKDFLICFDFTSERFNLDHVCLYRFTLTMERPVREEQLAVLYQQDTCLMEIWVTNKIEPDVVSWSKVFLAVDMEPLTGSFIPFAFFAGSFFIDEEKKIAVVFDKDQEEINDRAYLIGENGYYKEVDLGYMNGYYQQQVDPRGPDPVFPLVCSYSPSLVTIPQGTRGKRKERDY.

Residues 1-51 (MTTICDLPRDLVARILSRVPLTSMRRVRFTCKRWNTISKDPSFAKTHFGKA) form the F-box domain.

The protein is Putative F-box protein At4g09790 of Arabidopsis thaliana (Mouse-ear cress).